Here is a 201-residue protein sequence, read N- to C-terminus: Mediator of RNA polymerase II transcription subunit 22 (201 aa).

A coiled-coil region spans residues 93–123 (SVNESINQRNQQLRTLREECDKKLIALRDDI). The interval 182–201 (SQIHTPPHLNGHGAGMTEHT) is disordered.

It belongs to the Mediator complex subunit 22 family. Component of the Mediator complex.

It is found in the nucleus. Functionally, component of the Mediator complex, a coactivator involved in the regulated transcription of nearly all RNA polymerase II-dependent genes. Mediator functions as a bridge to convey information from gene-specific regulatory proteins to the basal RNA polymerase II transcription machinery. Mediator is recruited to promoters by direct interactions with regulatory proteins and serves as a scaffold for the assembly of a functional preinitiation complex with RNA polymerase II and the general transcription factors. In Xenopus laevis (African clawed frog), this protein is Mediator of RNA polymerase II transcription subunit 22 (med22).